The sequence spans 354 residues: Dual-specificity RNA methyltransferase RlmN (354 aa).

Glu89 acts as the Proton acceptor in catalysis. Residues 106–339 (KEAKYTVCVS…CTIRKSKGMD (234 aa)) enclose the Radical SAM core domain. Residues Cys113 and Cys344 are joined by a disulfide bond. [4Fe-4S] cluster is bound by residues Cys120, Cys124, and Cys127. Residues 170–171 (GE), Ser202, 225–227 (SLH), and Asn301 contribute to the S-adenosyl-L-methionine site. Cys344 (S-methylcysteine intermediate) is an active-site residue.

The protein belongs to the radical SAM superfamily. RlmN family. Requires [4Fe-4S] cluster as cofactor.

The protein resides in the cytoplasm. It catalyses the reaction adenosine(2503) in 23S rRNA + 2 reduced [2Fe-2S]-[ferredoxin] + 2 S-adenosyl-L-methionine = 2-methyladenosine(2503) in 23S rRNA + 5'-deoxyadenosine + L-methionine + 2 oxidized [2Fe-2S]-[ferredoxin] + S-adenosyl-L-homocysteine. The catalysed reaction is adenosine(37) in tRNA + 2 reduced [2Fe-2S]-[ferredoxin] + 2 S-adenosyl-L-methionine = 2-methyladenosine(37) in tRNA + 5'-deoxyadenosine + L-methionine + 2 oxidized [2Fe-2S]-[ferredoxin] + S-adenosyl-L-homocysteine. Functionally, specifically methylates position 2 of adenine 2503 in 23S rRNA and position 2 of adenine 37 in tRNAs. m2A2503 modification seems to play a crucial role in the proofreading step occurring at the peptidyl transferase center and thus would serve to optimize ribosomal fidelity. The chain is Dual-specificity RNA methyltransferase RlmN from Nautilia profundicola (strain ATCC BAA-1463 / DSM 18972 / AmH).